Here is a 311-residue protein sequence, read N- to C-terminus: Methionyl-tRNA formyltransferase (311 aa).

110 to 113 lines the (6S)-5,6,7,8-tetrahydrofolate pocket; it reads SLLP.

This sequence belongs to the Fmt family.

It catalyses the reaction L-methionyl-tRNA(fMet) + (6R)-10-formyltetrahydrofolate = N-formyl-L-methionyl-tRNA(fMet) + (6S)-5,6,7,8-tetrahydrofolate + H(+). Its function is as follows. Attaches a formyl group to the free amino group of methionyl-tRNA(fMet). The formyl group appears to play a dual role in the initiator identity of N-formylmethionyl-tRNA by promoting its recognition by IF2 and preventing the misappropriation of this tRNA by the elongation apparatus. The polypeptide is Methionyl-tRNA formyltransferase (Streptococcus gordonii (strain Challis / ATCC 35105 / BCRC 15272 / CH1 / DL1 / V288)).